We begin with the raw amino-acid sequence, 481 residues long: Proline--tRNA ligase (481 aa).

The protein belongs to the class-II aminoacyl-tRNA synthetase family. ProS type 3 subfamily. In terms of assembly, homodimer.

It is found in the cytoplasm. The catalysed reaction is tRNA(Pro) + L-proline + ATP = L-prolyl-tRNA(Pro) + AMP + diphosphate. In terms of biological role, catalyzes the attachment of proline to tRNA(Pro) in a two-step reaction: proline is first activated by ATP to form Pro-AMP and then transferred to the acceptor end of tRNA(Pro). The chain is Proline--tRNA ligase from Chlorobium luteolum (strain DSM 273 / BCRC 81028 / 2530) (Pelodictyon luteolum).